The chain runs to 800 residues: Transducin beta-like protein 3 (800 aa).

Position 2 is an N-acetylalanine (alanine 2). 13 WD repeats span residues glutamate 64–lysine 105, isoleucine 107–histidine 146, glycine 149–valine 190, alanine 193–threonine 232, leucine 245–threonine 284, glycine 290–glutamine 329, glycine 332–leucine 372, glycine 374–cysteine 413, glycine 419–asparagine 459, cysteine 477–valine 516, glycine 519–glutamate 560, histidine 562–aspartate 602, and histidine 604–glutamate 642. A Glycyl lysine isopeptide (Lys-Gly) (interchain with G-Cter in SUMO2) cross-link involves residue lysine 407.

Part of the small subunit (SSU) processome, composed of more than 70 proteins and the RNA chaperone small nucleolar RNA (snoRNA) U3.

The protein resides in the nucleus. It is found in the nucleolus. Its function is as follows. Part of the small subunit (SSU) processome, first precursor of the small eukaryotic ribosomal subunit. During the assembly of the SSU processome in the nucleolus, many ribosome biogenesis factors, an RNA chaperone and ribosomal proteins associate with the nascent pre-rRNA and work in concert to generate RNA folding, modifications, rearrangements and cleavage as well as targeted degradation of pre-ribosomal RNA by the RNA exosome. In Rattus norvegicus (Rat), this protein is Transducin beta-like protein 3 (Tbl3).